Reading from the N-terminus, the 201-residue chain is Extracellular superoxide dismutase [Cu-Zn] (201 aa).

A signal peptide spans 1 to 42 (MINSFIVIFLSFLIFINYANLVCVEATHVYGRRSHSNGMHGN). Cu cation-binding residues include His-89, His-91, and His-106. Cys-100 and Cys-192 are oxidised to a cystine. Positions 106, 114, 123, and 126 each coordinate Zn(2+). His-163 is a binding site for Cu cation.

This sequence belongs to the Cu-Zn superoxide dismutase family. Homodimer. It depends on Cu cation as a cofactor. Requires Zn(2+) as cofactor.

The protein localises to the secreted. The protein resides in the extracellular space. The enzyme catalyses 2 superoxide + 2 H(+) = H2O2 + O2. Its function is as follows. Destroys radicals which are normally produced within the cells and which are toxic to biological systems. May act in the parasite defense against phagocyte-generated reactive oxygen species. In Onchocerca volvulus, this protein is Extracellular superoxide dismutase [Cu-Zn] (sod-4).